Reading from the N-terminus, the 432-residue chain is Amino-acid acetyltransferase (432 aa).

Residues 286 to 425 (EQLREAGIED…ASLYNFQRNS (140 aa)) form the N-acetyltransferase domain.

It belongs to the acetyltransferase family. ArgA subfamily.

The protein resides in the cytoplasm. It carries out the reaction L-glutamate + acetyl-CoA = N-acetyl-L-glutamate + CoA + H(+). Its pathway is amino-acid biosynthesis; L-arginine biosynthesis; N(2)-acetyl-L-ornithine from L-glutamate: step 1/4. The protein is Amino-acid acetyltransferase of Pseudomonas aeruginosa (strain LESB58).